Reading from the N-terminus, the 63-residue chain is Hirudin-P6 (63 aa).

The interval 1-3 is interaction with thrombin active site; sequence MRY. 3 cysteine pairs are disulfide-bonded: C6–C14, C16–C28, and C22–C37. Basic and acidic residues predominate over residues 35-55; sequence KKCVEGEGTRKPQNEGQHDFD. Residues 35–63 are disordered; it reads KKCVEGEGTRKPQNEGQHDFDPIPEEYLS. An O-linked (GalNAc...) threonine glycan is attached at T43. Residues 53-63 are interaction with fibrinogen-binding exosite of thrombin; the sequence is DFDPIPEEYLS. The residue at position 61 (Y61) is a Sulfotyrosine.

The protein belongs to the protease inhibitor I14 (hirudin) family. O-linked glycan consists of Fuc-Gal-GalNAc trisaccharide.

It localises to the secreted. Functionally, hirudin is a potent thrombin-specific protease inhibitor. It forms a stable non-covalent complex with alpha-thrombin, thereby abolishing its ability to cleave fibrinogen. This is Hirudin-P6 from Hirudinaria manillensis (Asian medical leech).